Reading from the N-terminus, the 88-residue chain is Exodeoxyribonuclease 7 small subunit (88 aa).

This sequence belongs to the XseB family. As to quaternary structure, heterooligomer composed of large and small subunits.

Its subcellular location is the cytoplasm. It carries out the reaction Exonucleolytic cleavage in either 5'- to 3'- or 3'- to 5'-direction to yield nucleoside 5'-phosphates.. In terms of biological role, bidirectionally degrades single-stranded DNA into large acid-insoluble oligonucleotides, which are then degraded further into small acid-soluble oligonucleotides. The polypeptide is Exodeoxyribonuclease 7 small subunit (Bordetella bronchiseptica (strain ATCC BAA-588 / NCTC 13252 / RB50) (Alcaligenes bronchisepticus)).